The sequence spans 132 residues: MDVTXLLLATLLVFLCCFAAYSHLPPEEKLRDDRSLRSNSSVNLLDLPSVSIVALNKKSKKISRKEAENKRSSKKEASKQKVARPRTPLSVPCVSTRGSCKPPAPACCHPCASCQCRFFRSACSCRVINVNC.

Positions Met-1 to Ser-22 are cleaved as a signal peptide. Asn-39 is a glycosylation site (N-linked (GlcNAc...) asparagine). A disordered region spans residues Ile-62–Cys-93. The span at Arg-64–Lys-79 shows a compositional bias: basic and acidic residues. Intrachain disulfides connect Cys-93-Cys-108, Cys-100-Cys-114, Cys-107-Cys-125, Cys-111-Cys-132, and Cys-116-Cys-123. The 40-residue stretch at Cys-93–Cys-132 folds into the Agouti domain.

The protein localises to the secreted. In terms of biological role, involved in the regulation of melanogenesis. The binding of ASP to MC1R precludes alpha-MSH initiated signaling and thus blocks production of cAMP, leading to a down-regulation of eumelanogenesis (brown/black pigment) and thus increasing synthesis of pheomelanin (yellow/red pigment). This chain is Agouti-signaling protein (ASIP), found in Leontopithecus chrysomelas (Golden-headed lion tamarin).